We begin with the raw amino-acid sequence, 424 residues long: Histidine--tRNA ligase (424 aa).

It belongs to the class-II aminoacyl-tRNA synthetase family. In terms of assembly, homodimer.

It localises to the cytoplasm. The enzyme catalyses tRNA(His) + L-histidine + ATP = L-histidyl-tRNA(His) + AMP + diphosphate + H(+). This chain is Histidine--tRNA ligase, found in Escherichia coli O127:H6 (strain E2348/69 / EPEC).